Consider the following 197-residue polypeptide: uncharacterized protein (197 aa).

This is an uncharacterized protein from Archaeoglobus fulgidus (strain ATCC 49558 / DSM 4304 / JCM 9628 / NBRC 100126 / VC-16).